Reading from the N-terminus, the 339-residue chain is Cullin-associated NEDD8-dissociated protein 1, N-terminal part (339 aa).

HEAT repeat units lie at residues 5-42 (HTIQ…NPCS) and 50-87 (ASAT…RLPL).

Interacts with candA-C. Interacts with unneddylated cullins culA and culD; interaction occurs only when complexed with candA-C.

The protein resides in the nucleus. Assembly factor of SCF (SKP1-CUL1-F-box protein) E3 ubiquitin ligase complexes that promotes the exchange of the substrate-recognition F-box subunit in SCF complexes, thereby playing a key role in the cellular repertoire of SCF complexes. Acts as a F-box protein exchange factor when interacting with candA-C. This chain is Cullin-associated NEDD8-dissociated protein 1, N-terminal part (candA-N), found in Emericella nidulans (strain FGSC A4 / ATCC 38163 / CBS 112.46 / NRRL 194 / M139) (Aspergillus nidulans).